Consider the following 377-residue polypeptide: Glutamate 5-kinase (377 aa).

K22 is a binding site for ATP. 3 residues coordinate substrate: S62, D149, and N161. ATP contacts are provided by residues T181–D182 and T223–K229. The region spanning R285–E363 is the PUA domain.

The protein belongs to the glutamate 5-kinase family.

The protein localises to the cytoplasm. It carries out the reaction L-glutamate + ATP = L-glutamyl 5-phosphate + ADP. It participates in amino-acid biosynthesis; L-proline biosynthesis; L-glutamate 5-semialdehyde from L-glutamate: step 1/2. In terms of biological role, catalyzes the transfer of a phosphate group to glutamate to form L-glutamate 5-phosphate. The protein is Glutamate 5-kinase of Bifidobacterium animalis subsp. lactis (strain AD011).